Consider the following 317-residue polypeptide: Melanocyte-stimulating hormone receptor (317 aa).

At 1 to 37 the chain is on the extracellular side; it reads MPMQGAQRKLLGSLNSTPTATSNLGLAANHTGAPCLE. N-linked (GlcNAc...) asparagine glycosylation is present at asparagine 29. A helical membrane pass occupies residues 38–63; sequence VSIPDGLFLSLGLVSLVENVLVVAAV. Over 64-72 the chain is Cytoplasmic; it reads AKNRNLHSS. A helical transmembrane segment spans residues 73–93; the sequence is MYCFICCLALSDLLVSGSNML. Residues 94-118 are Extracellular-facing; sequence ETAVILLLETGALATRTSVVQQLHN. Residues 119–140 form a helical membrane-spanning segment; the sequence is TINVLTCSSMLCSLCFLGAIAV. Topologically, residues 141 to 163 are cytoplasmic; that stretch reads DRYISIFYALRYHSIMTLPRAQR. A helical transmembrane segment spans residues 164–183; it reads AIAAIWVASVLSSTLFITYY. Residues 184–191 lie on the Extracellular side of the membrane; sequence DHAAVLLC. Residues 192 to 211 traverse the membrane as a helical segment; the sequence is LVVFFLAMLVLMAVLYVHML. The Cytoplasmic portion of the chain corresponds to 212–240; the sequence is ARACQHAHGIIRLHKRQTPAHQGFGLRGA. Residues 241–266 traverse the membrane as a helical segment; the sequence is ATLTILLGIFFLCWGPFFLHLTLVVF. Topologically, residues 267 to 279 are extracellular; the sequence is CPQHLTCSCIFKN. A helical transmembrane segment spans residues 280-300; that stretch reads FKVFLTLIICNTIIDPLIYAF. Residues 301–317 lie on the Cytoplasmic side of the membrane; that stretch reads RSQELRRTLKEVLLCSW. A lipid anchor (S-palmitoyl cysteine) is attached at cysteine 315.

The protein belongs to the G-protein coupled receptor 1 family. In terms of assembly, interacts with MGRN1, but does not undergo MGRN1-mediated ubiquitination; this interaction competes with GNAS-binding and thus inhibits agonist-induced cAMP production. Interacts with OPN3; the interaction results in a decrease in MC1R-mediated cAMP signaling and ultimately a decrease in melanin production in melanocytes.

The protein resides in the cell membrane. Its function is as follows. Receptor for MSH (alpha, beta and gamma) and ACTH. The activity of this receptor is mediated by G proteins which activate adenylate cyclase. Mediates melanogenesis, the production of eumelanin (black/brown) and phaeomelanin (red/yellow), via regulation of cAMP signaling in melanocytes. This chain is Melanocyte-stimulating hormone receptor (MC1R), found in Saguinus oedipus (Cotton-top tamarin).